Reading from the N-terminus, the 117-residue chain is Large ribosomal subunit protein uL18 (117 aa).

Belongs to the universal ribosomal protein uL18 family. As to quaternary structure, part of the 50S ribosomal subunit; part of the 5S rRNA/L5/L18/L25 subcomplex. Contacts the 5S and 23S rRNAs.

This is one of the proteins that bind and probably mediate the attachment of the 5S RNA into the large ribosomal subunit, where it forms part of the central protuberance. This is Large ribosomal subunit protein uL18 from Photobacterium profundum (strain SS9).